Reading from the N-terminus, the 879-residue chain is Phosphoenolpyruvate carboxylase (879 aa).

Catalysis depends on residues H141 and K546.

Belongs to the PEPCase type 1 family. The cofactor is Mg(2+).

The catalysed reaction is oxaloacetate + phosphate = phosphoenolpyruvate + hydrogencarbonate. Forms oxaloacetate, a four-carbon dicarboxylic acid source for the tricarboxylic acid cycle. This is Phosphoenolpyruvate carboxylase from Stutzerimonas stutzeri (strain A1501) (Pseudomonas stutzeri).